The chain runs to 201 residues: Small ribosomal subunit protein uS4c (201 aa).

Positions 89–152 (MRLDNILFRL…NSRTLVQNLL (64 aa)) constitute an S4 RNA-binding domain.

The protein belongs to the universal ribosomal protein uS4 family. As to quaternary structure, part of the 30S ribosomal subunit. Contacts protein S5. The interaction surface between S4 and S5 is involved in control of translational fidelity.

It localises to the plastid. The protein localises to the chloroplast. Its function is as follows. One of the primary rRNA binding proteins, it binds directly to 16S rRNA where it nucleates assembly of the body of the 30S subunit. Functionally, with S5 and S12 plays an important role in translational accuracy. The chain is Small ribosomal subunit protein uS4c (rps4) from Arabidopsis thaliana (Mouse-ear cress).